A 610-amino-acid polypeptide reads, in one-letter code: MARMSTNSTTPLSHIRNFSIVAHIDHGKSTLADRLIQTTGGLAEREMSEQVLDNMEIERERGITIKAQTVRLHYQANNGEKYVLNLIDTPGHVDFAYEVSRSLSACEGSLLVVDASQGVEAQTLANVYQAIDNNHELVTVLNKIDLPAAEPDRIKEQIEEVIGIDASEAVLISAKTGLGIPDVLEAIVHKLPAPKSAGGEKAPLKALLVDSWYDTYLGVMVLVRIIDGVLTKGQTIRMMGTDAKYQVERVGVLTPKMVNVDSLGPGEIGFITASIKEVADTRVGDTITEDKRPTAEALPGFKPAQPVVFCGLFPVDAADFEDLRAAMGKLRLNDASFSFEMESSAALGFGFRCGFLGLLHLEIIQERLEREFDLDLIATAPSVVYQLTMTDGSERELHNPADMPDVVKIAEIREPWIKATIMTPDDYLGGILKLCQDRRGIQTELTYVGTRAMVTYELPLNEVVFDFYDRLKSISKGYASFDYHLEGYRAGNLVKMSILVNGEPVDALSMLVHRTAAEKRGRDMCERLKELIPKHMFKIPIQAAIGGNVIARETISALRKDVTAKCYGGDATRKRKLLDKQKEGKKRMRQFGKVEIPQEAFIAALKMGDE.

The tr-type G domain occupies 13 to 195 (SHIRNFSIVA…AIVHKLPAPK (183 aa)). GTP is bound by residues 25-30 (DHGKST) and 142-145 (NKID).

Belongs to the TRAFAC class translation factor GTPase superfamily. Classic translation factor GTPase family. LepA subfamily.

The protein resides in the cell inner membrane. The catalysed reaction is GTP + H2O = GDP + phosphate + H(+). Required for accurate and efficient protein synthesis under certain stress conditions. May act as a fidelity factor of the translation reaction, by catalyzing a one-codon backward translocation of tRNAs on improperly translocated ribosomes. Back-translocation proceeds from a post-translocation (POST) complex to a pre-translocation (PRE) complex, thus giving elongation factor G a second chance to translocate the tRNAs correctly. Binds to ribosomes in a GTP-dependent manner. The protein is Elongation factor 4 of Rhizobium etli (strain ATCC 51251 / DSM 11541 / JCM 21823 / NBRC 15573 / CFN 42).